Consider the following 81-residue polypeptide: Large ribosomal subunit protein eL31 (81 aa).

It belongs to the eukaryotic ribosomal protein eL31 family.

This Methanothermobacter thermautotrophicus (strain ATCC 29096 / DSM 1053 / JCM 10044 / NBRC 100330 / Delta H) (Methanobacterium thermoautotrophicum) protein is Large ribosomal subunit protein eL31 (rpl31e).